Here is a 624-residue protein sequence, read N- to C-terminus: Glyco-Gag protein (624 aa).

The Cytoplasmic segment spans residues 1–63; sequence LGDVPGTSGA…FLPSVWNRSR (63 aa). A helical transmembrane segment spans residues 64–86; it reads AARLVCCSIVLCCLCLAVFLYWS. At 87-624 the chain is on the extracellular side; sequence ENMGQTVTTP…PQTSLLALDD (538 aa). An N-linked (GlcNAc...) asparagine; by host glycan is attached at Asn113. Pro residues-rich tracts occupy residues 200–209 and 247–258; these read PSLLPEPPLS and DPPPYRDPGPPP. 2 disordered regions span residues 200-284 and 290-309; these read PSLL…ASRL and LPVA…GGNG. An N-linked (GlcNAc...) asparagine; by host glycan is attached at Asn478. Basic and acidic residues-rich tracts occupy residues 520–552 and 572–605; these read RETP…EKER and KQDR…DCPK. The tract at residues 520-624 is disordered; the sequence is RETPEEREER…PQTSLLALDD (105 aa).

In terms of processing, glycosylated by host. Post-translationally, cleaved by host near the middle of the molecule, releasing the c-terminal half containing capsid and nucleoprotein domains op GAG.

The protein resides in the host cell membrane. Its function is as follows. Plays a role in viral particle release. Presumably acts by facilitating the fission of the virion bud at the cell surface. May prevent the antiviral activity of murine APOBEC3. This is Glyco-Gag protein from Mus musculus (Mouse).